We begin with the raw amino-acid sequence, 24 residues long: Humanin-like 13 (24 aa).

The protein belongs to the humanin family.

The protein localises to the secreted. It localises to the cytoplasm. Its function is as follows. Plays a role as a neuroprotective and antiapoptotic factor. In Homo sapiens (Human), this protein is Humanin-like 13.